The chain runs to 155 residues: Protein Smg homolog (155 aa).

Belongs to the Smg family.

The protein is Protein Smg homolog of Methylococcus capsulatus (strain ATCC 33009 / NCIMB 11132 / Bath).